Consider the following 356-residue polypeptide: Tyrosine recombinase XerS (356 aa).

The Core-binding (CB) domain occupies 16 to 121 (VMPPYVLEYY…ALSSLYKYLT (106 aa)). A Tyr recombinase domain is found at 169–354 (GFLDYIDSEY…INEEQKNALD (186 aa)). Catalysis depends on residues Arg210, Lys234, His306, Arg309, and His332. Catalysis depends on Tyr341, which acts as the O-(3'-phospho-DNA)-tyrosine intermediate.

It belongs to the 'phage' integrase family. XerS subfamily.

Its subcellular location is the cytoplasm. With respect to regulation, ftsK is required for recombination. Its function is as follows. Site-specific tyrosine recombinase, which acts by catalyzing the cutting and rejoining of the recombining DNA molecules. Essential to convert dimers of the bacterial chromosome into monomers to permit their segregation at cell division. Binds an atypical recombination dif site (difSL). Binds preferentially to the left arm and cooperatively to the right arm of difSL. This chain is Tyrosine recombinase XerS, found in Lactococcus lactis subsp. cremoris (strain MG1363).